A 584-amino-acid polypeptide reads, in one-letter code: MGKKGKKEKKGRGAEKTAAKMEKKVSKRSRKEEEDLEALIAHFQTLDAKKTQVTETPCPPPSPRLNASLSAHPEKDELILFGGEYFNGQKTFMYNELYIYSIRKDTWTKVDIPGPPPRRCAHQAVVVPQGGGQLWVFGGEFASPDGEQFYHYKDLWVLHLATKTWEQIRSTGGPSGRSGHRMVAWKRQLILFGGFHESARDYIYYSDVYTFSLDTFQWSKLSPSGAGPTPRSGCLMAVTPQGSIAIYGGYSKQRVKKDVDKGTQHSDMFLLKPAEGGEGKWAWTRINPSGVKPTARSGFSVAVAPNHQILVFGGVCDEEEEESLEGSFFSDLYIYDAAKSRWFAAQLKGPKSEKKKRRRGKAEDPEGTTEQETGGSSAPEPLEVIKEVVSEDGTVVTIKQVLTPSGLGVQPSPKADDSASEASSTGQEPCPRSNAMLAVKHGLLYVYGGMFEAGDRQVTLSDLYCLDLHKMEEWKTLVEMDPKSQEWLEESDSEEDSSSDEESEDGEDKDQEDSAEEGADPQHPEVARGEQFEEYLSRTEQHWLKLARSHVGPEAKEKKVLKVAQAMAKSCFDDAVQDIAQARH.

Positions methionine 1–lysine 10 are enriched in basic residues. 2 disordered regions span residues methionine 1–glutamate 33 and lysine 50–leucine 69. Residues glycine 11–lysine 24 are compositionally biased toward basic and acidic residues. Kelch repeat units follow at residues glutamate 77–glutamine 129, glutamine 133–arginine 187, glutamine 188–valine 238, serine 243–serine 289, and glutamine 308–lysine 361. Disordered regions lie at residues lysine 348–proline 381, serine 405–serine 433, and proline 482–glutamate 533. At serine 418 the chain carries Phosphoserine. One copy of the Kelch 6 repeat lies at leucine 443–glutamate 494. The span at tryptophan 487 to alanine 519 shows a compositional bias: acidic residues. Positions aspartate 520–glutamate 533 are enriched in basic and acidic residues.

This chain is Kelch domain-containing protein 4 (Klhdc4), found in Mus musculus (Mouse).